Here is an 879-residue protein sequence, read N- to C-terminus: Leucine--tRNA ligase (879 aa).

A 'HIGH' region motif is present at residues 45–55 (PYPSGALHMGH). Residues 637–641 (KMSKS) carry the 'KMSKS' region motif. Residue Lys-640 participates in ATP binding.

Belongs to the class-I aminoacyl-tRNA synthetase family.

Its subcellular location is the cytoplasm. The catalysed reaction is tRNA(Leu) + L-leucine + ATP = L-leucyl-tRNA(Leu) + AMP + diphosphate. The chain is Leucine--tRNA ligase from Xylella fastidiosa (strain M12).